Here is a 164-residue protein sequence, read N- to C-terminus: S-ribosylhomocysteine lyase (164 aa).

Residues H54, H58, and C128 each coordinate Fe cation.

It belongs to the LuxS family. Homodimer. Fe cation is required as a cofactor.

The enzyme catalyses S-(5-deoxy-D-ribos-5-yl)-L-homocysteine = (S)-4,5-dihydroxypentane-2,3-dione + L-homocysteine. Functionally, involved in the synthesis of autoinducer 2 (AI-2) which is secreted by bacteria and is used to communicate both the cell density and the metabolic potential of the environment. The regulation of gene expression in response to changes in cell density is called quorum sensing. Catalyzes the transformation of S-ribosylhomocysteine (RHC) to homocysteine (HC) and 4,5-dihydroxy-2,3-pentadione (DPD). The chain is S-ribosylhomocysteine lyase from Campylobacter jejuni subsp. jejuni serotype O:6 (strain 81116 / NCTC 11828).